The following is a 458-amino-acid chain: Divalent metal cation transporter MntH (458 aa).

Transmembrane regions (helical) follow at residues 38 to 58 (GFWKTLMAFMGPGALVAVGYM), 86 to 106 (LIAMLLQAMAARLGIVTGMDL), 119 to 139 (GIFLWIVTELAIMATDIAEII), 151 to 171 (IPLLWGVLITAFDVLLLLLLM), 180 to 200 (AIVATLVAVILFVFLYEVILA), 223 to 243 (MLFLALGIVGATVMPHNLYLH), 275 to 295 (LTIAFVVNCLLLILGAAMFYG), 315 to 335 (IVGSIASPMLSLLFAVALLAS), 370 to 390 (GLSILPVIIFTVYYHGNEAQV), 395 to 415 (IYSQVFLSIALPVSMIPLTLF), and 436 to 456 (WFVTIVLTLLNIYLILQTVGL).

This sequence belongs to the NRAMP family.

The protein resides in the cell membrane. Its function is as follows. H(+)-stimulated, divalent metal cation uptake system. The polypeptide is Divalent metal cation transporter MntH (Latilactobacillus sakei subsp. sakei (strain 23K) (Lactobacillus sakei subsp. sakei)).